The following is a 98-amino-acid chain: UPF0235 protein Mmc1_3654 (98 aa).

This sequence belongs to the UPF0235 family.

The sequence is that of UPF0235 protein Mmc1_3654 from Magnetococcus marinus (strain ATCC BAA-1437 / JCM 17883 / MC-1).